We begin with the raw amino-acid sequence, 157 residues long: MSYNITNPNQYQYFAAVWAEPIPMLNQCMSALSQSYQTQAARDTVRQQFSNLLSAVVTPSQRFPDTGSRVYVNSAVIKPLYEALMKSFDTRNRIIETEEESRPSASEVANATQRVDDATVAIRSQIQLLLSELSNGHGYMNRAEFEALLPWTTAPAT.

Ser-2 is modified (N-acetylserine; by host).

Belongs to the virgaviridae capsid protein family.

Its subcellular location is the virion. Its function is as follows. Capsid protein self-assembles to form rod-shaped virions about 18 nm in diameter with a central canal enclosing the viral genomic RNA. This Brassicaceae (TVCV) protein is Capsid protein (CP).